The primary structure comprises 519 residues: MSYPQFGYPYSSAPQFLMATNSLSTCCESGGRTLADSGPAASAQAPVYCPVYESRLLATARHELNSAAALGVYGGPYGGSQGYGNYVTYGSEASAFYSLNSFDSKDGSGSAHGGLAPAAAAYYPYEPALGQYPYDRYGTMDSGTRRKNATRETTSTLKAWLQEHRKNPYPTKGEKIMLAIITKMTLTQVSTWFANARRRLKKENKMTWPPRNKCADEKRPYAEGEEEEGGEEEAREEPLKSSKNAEPVGKEEKELELSDLDDFDPLEAEPPACELKPPFHSLDGGLERVPAAPDGPVKEASGALRMSLAAGGGAALDEDLERARSCLRSAAAGPEPLPGAEGGPQVCEAKLGFVPAGASAGLEAKPRIWSLAHTATAAAAAATSLSQTEFPSCMLKRQGPAAPAAVSSAPATSPSVALPHSGALDRHQDSPVTSLRNWVDGVFHDPILRHSTLNQAWATAKGALLDPGPLGRSLGAGANVLTAPLARAFPPAVPQDAPAAGAARELLALPKAGGKPFCA.

Residues 143–204 (GTRRKNATRE…NARRRLKKEN (62 aa)) constitute a DNA-binding region (homeobox; TALE-type). The disordered stretch occupies residues 204–298 (NKMTWPPRNK…VPAAPDGPVK (95 aa)). The segment covering 213 to 222 (KCADEKRPYA) has biased composition (basic and acidic residues). Composition is skewed to acidic residues over residues 223 to 235 (EGEE…EEAR) and 257 to 267 (LSDLDDFDPLE).

This sequence belongs to the TALE/IRO homeobox family. As to quaternary structure, interacts with the vitamin D receptor VDR but doesn't affect its transactivation activity. As to expression, predominantly expressed in cardiac ventricles.

Its subcellular location is the nucleus. Functionally, likely to be an important mediator of ventricular differentiation during cardiac development. The protein is Iroquois-class homeodomain protein IRX-4 (IRX4) of Homo sapiens (Human).